The sequence spans 165 residues: MAETDAAAAQQPPQIQMRVLGQFIRDMSFENVMAQRGASGDVQPDVNVQVNLDAKKRSTDNQYEIAIKLNITSKAKGMDDVLFVFEIDYCGIFHVEGVPNEQLHPFLLIECPRMLFPFLRRIVSDITRDGGYPPLNLDNIDFMALYRSELARQQAAAQAEQKADA.

It belongs to the SecB family. As to quaternary structure, homotetramer, a dimer of dimers. One homotetramer interacts with 1 SecA dimer.

It is found in the cytoplasm. One of the proteins required for the normal export of preproteins out of the cell cytoplasm. It is a molecular chaperone that binds to a subset of precursor proteins, maintaining them in a translocation-competent state. It also specifically binds to its receptor SecA. This Ruegeria pomeroyi (strain ATCC 700808 / DSM 15171 / DSS-3) (Silicibacter pomeroyi) protein is Protein-export protein SecB.